The following is a 213-amino-acid chain: Na(+)-translocating NADH-quinone reductase subunit D (213 aa).

Transmembrane regions (helical) follow at residues 21-41 (PLIA…VNTA), 42-62 (LTMG…VSLL), 77-97 (IIIS…FFDI), 101-121 (LSVF…AESL), 131-151 (FLDG…VSII), 153-173 (EFFG…FYAS), and 183-203 (FGLM…IWGV).

Belongs to the NqrDE/RnfAE family. In terms of assembly, composed of six subunits; NqrA, NqrB, NqrC, NqrD, NqrE and NqrF.

Its subcellular location is the cell inner membrane. The enzyme catalyses a ubiquinone + n Na(+)(in) + NADH + H(+) = a ubiquinol + n Na(+)(out) + NAD(+). NQR complex catalyzes the reduction of ubiquinone-1 to ubiquinol by two successive reactions, coupled with the transport of Na(+) ions from the cytoplasm to the periplasm. NqrA to NqrE are probably involved in the second step, the conversion of ubisemiquinone to ubiquinol. The chain is Na(+)-translocating NADH-quinone reductase subunit D from Chlamydia abortus (strain DSM 27085 / S26/3) (Chlamydophila abortus).